The primary structure comprises 354 residues: Methionine import ATP-binding protein MetN 2 (354 aa).

The ABC transporter domain occupies 6 to 250 (IELKNISVHF…PQKPLTKEFI (245 aa)). 42–49 (GYSGAGKS) lines the ATP pocket.

This sequence belongs to the ABC transporter superfamily. Methionine importer (TC 3.A.1.24) family. In terms of assembly, the complex is composed of two ATP-binding proteins (MetN), two transmembrane proteins (MetI) and a solute-binding protein (MetQ).

The protein localises to the cell membrane. It catalyses the reaction L-methionine(out) + ATP + H2O = L-methionine(in) + ADP + phosphate + H(+). It carries out the reaction D-methionine(out) + ATP + H2O = D-methionine(in) + ADP + phosphate + H(+). In terms of biological role, part of the ABC transporter complex MetNIQ involved in methionine import. Responsible for energy coupling to the transport system. The protein is Methionine import ATP-binding protein MetN 2 of Oenococcus oeni (strain ATCC BAA-331 / PSU-1).